Here is a 439-residue protein sequence, read N- to C-terminus: L-tryptophan decarboxylase (439 aa).

It belongs to the phosphatidylserine decarboxylase family.

The enzyme catalyses L-tryptophan + H(+) = tryptamine + CO2. It functions in the pathway secondary metabolite biosynthesis. L-tryptophan decarboxylase; part of the gene cluster that mediates the biosynthesis of psilocybin, a psychotropic tryptamine-derived natural product. The first step in the pathway is the decarboxylation of L-tryptophan to tryptamine by the decarboxylase psiD. 4-hydroxy-L-tryptophan is accepted as substrate by psiD as well. The cytochrome P450 monooxygenase psiH then converts tryptamine to 4-hydroxytryptamine. The kinase psiK catalyzes the 4-O-phosphorylation step by converting 4-hydroxytryptamine into norbaeocystin. The methyltransferase psiM then catalyzes iterative methyl transfer to the amino group of norbaeocystin to yield psilocybin via a monomethylated intermediate, baeocystin. 4-hydroxy-6-methyl-l-tryptophancan also be converted the decarboxylase PsiD, kinase PsiK, and methyltransferase PsiM into respectively 6-methyl-norbaeocystin, 6-methylbaeocystin, and 6-methylpsilocybin. The polypeptide is L-tryptophan decarboxylase (Psilocybe cubensis (Psychedelic mushroom)).